We begin with the raw amino-acid sequence, 434 residues long: MAPPRWHHDRRRMAIFVRVGLYTLLFLMGYVVPLIIFYNRSRADTFEDTPRSGEAFISDENFFHCIAERLSYKEQHPARIPYVLIPVTMDYQDIKQLFCNITVPMTYIMFINNGMFRPLRSLLDRLAVDLRDYVDQNLFIIHHPENIAYASAVNEGLRHALNFSVAKVPWVFITNADVRFAPGLIDEFVSQANEKTQGQLERIRRLDQEIIAEARTLRNVPNRRFAFRSSQHPIITASSLPYRIRTMPPEEMKKQFADTYGIFYTDHKDFMATFALSRLAIATVGFFDENYYPAYGEDHDYVWRMAALGYQKYFSEPGKFVHFENANLNVGGSARNRGIFKNTAYFLQSVKFGRMNYQPFRLQYRRAKWFPDGVTIYQDTGRNPLPFNGTIPLDMWVLDTDRRRSIWEIGENIRCHRDYKPYSMKLLDFPVDPS.

The Cytoplasmic segment spans residues 1–18 (MAPPRWHHDRRRMAIFVR). A helical; Signal-anchor for type II membrane protein transmembrane segment spans residues 19-38 (VGLYTLLFLMGYVVPLIIFY). Residues asparagine 39, asparagine 100, asparagine 162, and asparagine 388 are each glycosylated (N-linked (GlcNAc...) asparagine). Topologically, residues 39–434 (NRSRADTFED…KLLDFPVDPS (396 aa)) are lumenal.

This sequence belongs to the glycosyltransferase 2 family.

The protein localises to the endoplasmic reticulum membrane. The protein operates within glycolipid biosynthesis; glycosylphosphatidylinositol-anchor biosynthesis. Its function is as follows. Glycosyltransferase that may be responsible for the addition of galactofuranosyl residues to the nascent lipophosphoglycan (LPG) chain. It could alternatively be involved in the synthesis of the galactofuranosyl donor. The sequence is that of Galactofuranosyl glycosyltransferase (LPG1) from Leishmania donovani.